Consider the following 489-residue polypeptide: Probable anthranilate synthase component 1 (489 aa).

Residues S54 and 262 to 264 (PYM) each bind L-tryptophan. 297-298 (GT) lines the chorismate pocket. Residue E324 participates in Mg(2+) binding. 2 positions are modified to phosphoserine: S390 and S392. Chorismate is bound by residues Y412, R433, 447 to 449 (GGG), and G449. E462 contributes to the Mg(2+) binding site. S488 carries the post-translational modification Phosphoserine.

The protein belongs to the anthranilate synthase component I family. As to quaternary structure, tetramer of two components I and two components II. The cofactor is Mg(2+).

The enzyme catalyses chorismate + L-glutamine = anthranilate + pyruvate + L-glutamate + H(+). Its pathway is amino-acid biosynthesis; L-tryptophan biosynthesis; L-tryptophan from chorismate: step 1/5. The sequence is that of Probable anthranilate synthase component 1 (trp3) from Schizosaccharomyces pombe (strain 972 / ATCC 24843) (Fission yeast).